A 773-amino-acid polypeptide reads, in one-letter code: Histone-lysine N-methyltransferase mes-2 (773 aa).

Over residues 1–13 (MSNSEPSTSTPSG) the composition is skewed to polar residues. Residues 1-33 (MSNSEPSTSTPSGKTKKRGKKCETSMGKSKKSK) are disordered. Residues 1 to 194 (MSNSEPSTST…TPDQLRLTHM (194 aa)) form an interaction with mes-6 region. A CXC domain is found at 505-614 (IREDDMRDSQ…SNIIKCRNFG (110 aa)). The SET domain occupies 616–737 (TRMIQKRTYC…ISEELTFDYS (122 aa)). The segment at 749 to 773 (VQTKERSEKPSRPKSQKLSKPMTSE) is disordered. Residues 750 to 759 (QTKERSEKPS) show a composition bias toward basic and acidic residues.

This sequence belongs to the class V-like SAM-binding methyltransferase superfamily. Histone-lysine methyltransferase family. EZ subfamily. In terms of assembly, interacts directly with mes-6 via its N-terminal domain. Forms a heterotrimeric complex with mes-3 and mes-6. Does not interact with mes-4. In adults, it is predominantly expressed in the germline, and weakly expressed in intestinal cells. Expressed in the hypoderm.

Its subcellular location is the nucleus. It catalyses the reaction L-lysyl(27)-[histone H3] + 3 S-adenosyl-L-methionine = N(6),N(6),N(6)-trimethyl-L-lysyl(27)-[histone H3] + 3 S-adenosyl-L-homocysteine + 3 H(+). Functionally, polycomb group (PcG) protein. Catalytic subunit of a the mes-2/mes-3/mes-6 complex, which methylates 'Lys-27' of histone H3, leading to transcriptional repression of the affected target genes. PcG proteins act by forming multiprotein complexes, which are required to maintain the transcriptionally repressive state of homeotic genes throughout development. In association with the nfya-1-NF-Y complex, may play a role in repressing the expression of the homeobox protein egl-5 in tissues such as the head. PcG proteins are not required to initiate repression, but to maintain it during later stages of development. The mes-2/mes-3/mes-6 complex may participate in the global inactivation of the X chromosomes in germline cells. This complex is required to exclude mes-4 from the inactivated X-chromosomes in germline cells. Required for small-RNA-induced H3K27 trimethylation. Involved in the negative regulation of lifespan in a germline-independent fashion. In Caenorhabditis elegans, this protein is Histone-lysine N-methyltransferase mes-2.